Consider the following 126-residue polypeptide: Major sperm protein 2 (126 aa).

Alanine 2 carries the post-translational modification N-acetylalanine. One can recognise an MSP domain in the interval aspartate 8–asparagine 125.

Sperm.

Its subcellular location is the cell projection. It localises to the pseudopodium. The protein resides in the cytoplasm. The protein localises to the cytoskeleton. Its function is as follows. Central component in molecular interactions underlying sperm crawling. Forms an extensive filament system that extends from sperm villipoda, along the leading edge of the pseudopod. The polypeptide is Major sperm protein 2 (MSP-2) (Globodera rostochiensis (Golden nematode worm)).